Here is a 946-residue protein sequence, read N- to C-terminus: 4-alpha-glucanotransferase DPE2 (946 aa).

CBM20 domains follow at residues 7-115 and 150-264; these read KKSL…DWWQ and SLEP…PWRG. The segment at 919–946 is disordered; it reads SGRSFPGKVDGAEESGEKLAKVQLNGKP.

Belongs to the disproportionating enzyme family.

Its subcellular location is the cytoplasm. The protein localises to the cytosol. The enzyme catalyses Transfers a segment of a (1-&gt;4)-alpha-D-glucan to a new position in an acceptor, which may be glucose or a (1-&gt;4)-alpha-D-glucan.. Cytosolic alpha-glucanotransferase essential for the cytosolic metabolism of maltose, an intermediate on the pathway by which starch is converted to sucrose in leaves at night. This Oryza sativa subsp. japonica (Rice) protein is 4-alpha-glucanotransferase DPE2 (DPE2).